Here is a 487-residue protein sequence, read N- to C-terminus: Glutamate--tRNA ligase (487 aa).

The short motif at 12-22 is the 'HIGH' region element; that stretch reads PSPTGYMHVGN. The 'KMSKS' region motif lies at 249–253; it reads KLSKR. Lys252 provides a ligand contact to ATP.

This sequence belongs to the class-I aminoacyl-tRNA synthetase family. Glutamate--tRNA ligase type 1 subfamily. As to quaternary structure, monomer.

The protein resides in the cytoplasm. It catalyses the reaction tRNA(Glu) + L-glutamate + ATP = L-glutamyl-tRNA(Glu) + AMP + diphosphate. Its function is as follows. Catalyzes the attachment of glutamate to tRNA(Glu) in a two-step reaction: glutamate is first activated by ATP to form Glu-AMP and then transferred to the acceptor end of tRNA(Glu). The protein is Glutamate--tRNA ligase of Clostridium novyi (strain NT).